An 867-amino-acid chain; its full sequence is DNA replication licensing factor mcm6 (867 aa).

Residues isoleucine 51–asparagine 76 form a disordered region. Over residues glutamate 61–glutamate 75 the composition is skewed to acidic residues. Positions isoleucine 420 to isoleucine 626 constitute an MCM domain. Residues serine 473, threonine 474, lysine 476, serine 477, and asparagine 578 each coordinate ATP. Residues serine 602–aspartate 605 carry the Arginine finger motif. Arginine 693 and glutamate 696 together coordinate ADP.

This sequence belongs to the MCM family. As to quaternary structure, component of the MCM2-7 complex. The complex forms a toroidal hexameric ring with the proposed subunit order MCM2-MCM6-MCM4-MCM7-MCM3-MCM5 (By simililarity).

The protein resides in the nucleus. The enzyme catalyses ATP + H2O = ADP + phosphate + H(+). Functionally, acts as a component of the MCM2-7 complex (MCM complex) which is the replicative helicase essential for 'once per cell cycle' DNA replication initiation and elongation in eukaryotic cells. Core component of CDC45-MCM-GINS (CMG) helicase, the molecular machine that unwinds template DNA during replication, and around which the replisome is built. The active ATPase sites in the MCM2-7 ring are formed through the interaction surfaces of two neighboring subunits such that a critical structure of a conserved arginine finger motif is provided in trans relative to the ATP-binding site of the Walker A box of the adjacent subunit. The six ATPase active sites, however, are likely to contribute differentially to the complex helicase activity. This is DNA replication licensing factor mcm6 (mcm6) from Dictyostelium discoideum (Social amoeba).